Reading from the N-terminus, the 2183-residue chain is Genome polyprotein (2183 aa).

Residue glycine 2 is the site of N-myristoyl glycine; by host attachment. Topologically, residues 2 to 1493 are cytoplasmic; it reads GAQVSTQKTG…HVSRAFICLQ (1492 aa). The tract at residues 566-582 is amphipathic alpha-helix; it reads FYQGPTEESVERAMGRV. Residues histidine 870 and aspartate 888 each act as for protease 2A activity in the active site. Zn(2+)-binding residues include cysteine 905 and cysteine 907. Residue cysteine 959 is the For protease 2A activity of the active site. Residues cysteine 965 and histidine 967 each coordinate Zn(2+). The interval 1099 to 1171 is membrane-binding; sequence NNNWLKKFTE…EQSAPSQSDQ (73 aa). Residues 1099-1237 are oligomerization; that stretch reads NNNWLKKFTE…SPGAGKSVAT (139 aa). Residues 1120–1124 are RNA-binding; sequence AVKIQ. Residues 1203–1359 enclose the SF3 helicase domain; it reads EKKMSNYIQF…SMYSQNGKIN (157 aa). 3 residues coordinate Zn(2+): cysteine 1367, cysteine 1379, and cysteine 1384. The C4-type; degenerate zinc finger occupies 1367-1384; it reads CDEECCPVNFKKCCPLVC. Positions 1411-1418 are RNA-binding; it reads EYNHRHSV. Positions 1422–1427 are oligomerization; sequence LEALFQ. The stretch at 1494-1509 is an intramembrane region; sequence ALTTFVSVAGIIYIIY. The Cytoplasmic portion of the chain corresponds to 1510–2183; it reads KLFAGFQGAY…TLRRKWLDAF (674 aa). Tyrosine 1519 bears the O-(5'-phospho-RNA)-tyrosine mark. A Peptidase C3 domain is found at 1539–1717; it reads GPAFEFAVAM…FSASLLRHYF (179 aa). Catalysis depends on for protease 3C activity residues histidine 1578, glutamate 1609, and cysteine 1685. Residues 1948-2064 form the RdRp catalytic domain; it reads GHLRAFDYSG…SYPLPIDASL (117 aa). Residues aspartate 1954 and aspartate 2050 each coordinate Mg(2+).

The protein belongs to the picornaviruses polyprotein family. In terms of assembly, interacts with capsid protein VP1 and capsid protein VP3 to form heterotrimeric protomers. Interacts with capsid protein VP0, and capsid protein VP3 to form heterotrimeric protomers. Five protomers subsequently associate to form pentamers which serve as building blocks for the capsid. Interacts with capsid protein VP2, capsid protein VP3 and capsid protein VP4 following cleavage of capsid protein VP0. Interacts with host CXADR. As to quaternary structure, interacts with capsid protein VP1 and capsid protein VP3 in the mature capsid. In terms of assembly, interacts with capsid protein VP0 and capsid protein VP1 to form heterotrimeric protomers. Five protomers subsequently associate to form pentamers which serve as building blocks for the capsid. Interacts with capsid protein VP4 in the mature capsid. Interacts with protein 2C; this interaction may be important for virion morphogenesis. Interacts with capsid protein VP1 and capsid protein VP3. As to quaternary structure, homodimer. In terms of assembly, homohexamer; forms a hexameric ring structure with 6-fold symmetry characteristic of AAA+ ATPases. Interacts (via N-terminus) with host RTN3 (via reticulon domain); this interaction is important for viral replication. Interacts with capsid protein VP3; this interaction may be important for virion morphogenesis. Interacts with protein 3CD. As to quaternary structure, homodimer. Interacts with host GBF1. Interacts (via GOLD domain) with host ACBD3 (via GOLD domain); this interaction allows the formation of a viral protein 3A/ACBD3 heterotetramer with a 2:2 stoichiometry, which will stimulate the recruitment of host PI4KB in order to synthesize PI4P at the viral RNA replication sites. In terms of assembly, interacts with RNA-directed RNA polymerase. Interacts with protein 3AB and with RNA-directed RNA polymerase. As to quaternary structure, interacts with Viral protein genome-linked and with protein 3CD. Mg(2+) serves as cofactor. In terms of processing, specific enzymatic cleavages in vivo by the viral proteases yield processing intermediates and the mature proteins. Post-translationally, myristoylation is required for the formation of pentamers during virus assembly. Further assembly of 12 pentamers and a molecule of genomic RNA generates the provirion. During virion maturation, immature virions are rendered infectious following cleavage of VP0 into VP4 and VP2. This maturation seems to be an autocatalytic event triggered by the presence of RNA in the capsid and it is followed by a conformational change infectious virion. In terms of processing, myristoylation is required during RNA encapsidation and formation of the mature virus particle. Post-translationally, VPg is uridylylated by the polymerase into VPg-pUpU. This acts as a nucleotide-peptide primer for the genomic RNA replication.

The protein localises to the virion. The protein resides in the host cytoplasm. It localises to the host cytoplasmic vesicle membrane. It is found in the host nucleus. It carries out the reaction a ribonucleoside 5'-triphosphate + H2O = a ribonucleoside 5'-diphosphate + phosphate + H(+). The catalysed reaction is Selective cleavage of Tyr-|-Gly bond in the picornavirus polyprotein.. The enzyme catalyses RNA(n) + a ribonucleoside 5'-triphosphate = RNA(n+1) + diphosphate. It catalyses the reaction Selective cleavage of Gln-|-Gly bond in the poliovirus polyprotein. In other picornavirus reactions Glu may be substituted for Gln, and Ser or Thr for Gly.. Its activity is regulated as follows. Replication or transcription is subject to high level of random mutations by the nucleotide analog ribavirin. In terms of biological role, forms an icosahedral capsid of pseudo T=3 symmetry with capsid proteins VP2 and VP3. The capsid is 300 Angstroms in diameter, composed of 60 copies of each capsid protein and enclosing the viral positive strand RNA genome. Capsid protein VP1 mainly forms the vertices of the capsid. Capsid protein VP1 interacts with host CXADR to provide virion attachment to target host cells. This attachment induces virion internalization. Tyrosine kinases are probably involved in the entry process. After binding to its receptor, the capsid undergoes conformational changes. Capsid protein VP1 N-terminus (that contains an amphipathic alpha-helix) and capsid protein VP4 are externalized. Together, they shape a pore in the host membrane through which viral genome is translocated to host cell cytoplasm. Functionally, forms an icosahedral capsid of pseudo T=3 symmetry with capsid proteins VP2 and VP3. The capsid is 300 Angstroms in diameter, composed of 60 copies of each capsid protein and enclosing the viral positive strand RNA genome. Lies on the inner surface of the capsid shell. After binding to the host receptor, the capsid undergoes conformational changes. Capsid protein VP4 is released, Capsid protein VP1 N-terminus is externalized, and together, they shape a pore in the host membrane through which the viral genome is translocated into the host cell cytoplasm. Its function is as follows. Component of immature procapsids, which is cleaved into capsid proteins VP4 and VP2 after maturation. Allows the capsid to remain inactive before the maturation step. In terms of biological role, cysteine protease that cleaves viral polyprotein and specific host proteins. It is responsible for the autocatalytic cleavage between the P1 and P2 regions, which is the first cleavage occurring in the polyprotein. Also cleaves the host translation initiation factor EIF4G1, in order to shut down the capped cellular mRNA translation. Inhibits the host nucleus-cytoplasm protein and RNA trafficking by cleaving host members of the nuclear pores. Counteracts stress granule formation probably by antagonizing its assembly or promoting its dissassembly. Cleaves and inhibits host IFIH1/MDA5, thereby inhibiting the type-I IFN production and the establishment of the antiviral state. Cleaves and inhibits host MAVS, thereby inhibiting the type-I IFN production and the establishment of the antiviral state. Functionally, plays an essential role in the virus replication cycle by acting as a viroporin. Creates a pore in the host endoplasmic reticulum and as a consequence releases Ca2+ in the cytoplasm of infected cell. In turn, high levels of cytoplasmic calcium may trigger membrane trafficking and transport of viral ER-associated proteins to viroplasms, sites of viral genome replication. Induces and associates with structural rearrangements of intracellular membranes. Displays RNA-binding, nucleotide binding and NTPase activities. May play a role in virion morphogenesis and viral RNA encapsidation by interacting with the capsid protein VP3. Its function is as follows. Localizes the viral replication complex to the surface of membranous vesicles. Together with protein 3CD binds the Cis-Active RNA Element (CRE) which is involved in RNA synthesis initiation. Acts as a cofactor to stimulate the activity of 3D polymerase, maybe through a nucleid acid chaperone activity. In terms of biological role, localizes the viral replication complex to the surface of membranous vesicles. It inhibits host cell endoplasmic reticulum-to-Golgi apparatus transport and causes the disassembly of the Golgi complex, possibly through GBF1 interaction. This would result in depletion of MHC, trail receptors and IFN receptors at the host cell surface. Plays an essential role in viral RNA replication by recruiting ACBD3 and PI4KB at the viral replication sites, thereby allowing the formation of the rearranged membranous structures where viral replication takes place. Functionally, acts as a primer for viral RNA replication and remains covalently bound to viral genomic RNA. VPg is uridylylated prior to priming replication into VPg-pUpU. The oriI viral genomic sequence may act as a template for this. The VPg-pUpU is then used as primer on the genomic RNA poly(A) by the RNA-dependent RNA polymerase to replicate the viral genome. During genome replication, the VPg-RNA linkage is removed by the host TDP2, thereby accelerating replication. During the late stage of the replication cycle, host TDP2 is excluded from sites of viral RNA synthesis and encapsidation, allowing for the generation of progeny virions. Involved in the viral replication complex and viral polypeptide maturation. It exhibits protease activity with a specificity and catalytic efficiency that is different from protease 3C. Protein 3CD lacks polymerase activity. Protein 3CD binds to the 5'UTR of the viral genome. Its function is as follows. Replicates the viral genomic RNA on the surface of intracellular membranes. May form linear arrays of subunits that propagate along a strong head-to-tail interaction called interface-I. Covalently attaches UMP to a tyrosine of VPg, which is used to prime RNA synthesis. The positive stranded RNA genome is first replicated at virus induced membranous vesicles, creating a dsRNA genomic replication form. This dsRNA is then used as template to synthesize positive stranded RNA genomes. ss(+)RNA genomes are either translated, replicated or encapsidated. In terms of biological role, major viral protease that mediates proteolytic processing of the polyprotein. Cleaves host EIF5B, contributing to host translation shutoff. Also cleaves host PABPC1, contributing to host translation shutoff. Cleaves host NLRP1, triggers host N-glycine-mediated degradation of the autoinhibitory NLRP1 N-terminal fragment. This chain is Genome polyprotein, found in Coxsackievirus B4 (strain E2).